The sequence spans 613 residues: Secretogranin-2 (613 aa).

The first 27 residues, 1–27 (MAEAKTHWLGAVLSLIPLIFLLSEAEA), serve as a signal peptide directing secretion. Positions 28–30 (ASF) are excised as a propeptide. Disordered regions lie at residues 67–105 (QQAH…DSLS) and 119–146 (QAEN…PMDM). The span at 92-105 (ENGDLPESSRDSLS) shows a compositional bias: basic and acidic residues. Residue Tyr150 is modified to Sulfotyrosine. 6 positions are modified to phosphoserine: Ser173, Ser267, Ser428, Ser528, Ser551, and Ser552. Basic and acidic residues predominate over residues 257-283 (ESQTQEEVRDSKENADKTEQINDEMKR). Positions 257-287 (ESQTQEEVRDSKENADKTEQINDEMKRSGQL) are disordered. Basic and acidic residues predominate over residues 546–557 (HLSQHSSQETDK). The interval 546–580 (HLSQHSSQETDKLASVSKRLPVGTPKSDDTPNRPY) is disordered.

This sequence belongs to the chromogranin/secretogranin protein family. Interacts with Secretogranin III/SCG3. In terms of tissue distribution, highest levels detected in anterior pituitary followed by adrenal medulla and posterior pituitary (at protein level). In the brain, high levels are found in the hypothalamus, comparable to those present in posterior pituitary with two- to six-fold lower levels present in the other brain regions investigated including caudate nucleus, hippocampus, thalamus and brainstem (at protein level).

The protein localises to the secreted. Functionally, neuroendocrine protein of the granin family that regulates the biogenesis of secretory granules. In Bos taurus (Bovine), this protein is Secretogranin-2 (SCG2).